We begin with the raw amino-acid sequence, 444 residues long: NADH-ubiquinone oxidoreductase chain 4 (444 aa).

13 consecutive transmembrane segments (helical) span residues 4 to 24 (YLFMIIFLIPICLLGNCWWLV), 28 to 48 (IFLLSFIFMISLYSYSDLSMI), 53 to 73 (GVDFYSFMLILLSLWICCLMI), 87 to 107 (NFFVFVVLLLLIMLFCSFSSL), 109 to 129 (LFSFYIFFESSLVPTLFLILG), 141 to 161 (VYLMFYTLVASLPLLLVLFSI), 173 to 193 (LIDFGSFYFLFYVFSIFAFLV), 212 to 232 (PISGSMILAGILLKLGGYGIF), 245 to 265 (FNYFVLSLSLFGGVIISFVCF), 272 to 294 (SLIAYSSVAHMSLVICGLMTMNW), 306 to 326 (GHGISSSGLFCLSNIIYELLG), 330 to 350 (LLINKGMINLMPSMTIWWFLL), and 373 to 393 (IISWSSYMILLLIFLSFFSAV).

Belongs to the complex I subunit 4 family.

The protein localises to the mitochondrion membrane. It carries out the reaction a ubiquinone + NADH + 5 H(+)(in) = a ubiquinol + NAD(+) + 4 H(+)(out). In terms of biological role, core subunit of the mitochondrial membrane respiratory chain NADH dehydrogenase (Complex I) that is believed to belong to the minimal assembly required for catalysis. Complex I functions in the transfer of electrons from NADH to the respiratory chain. The immediate electron acceptor for the enzyme is believed to be ubiquinone. This chain is NADH-ubiquinone oxidoreductase chain 4 (ND4), found in Locusta migratoria (Migratory locust).